Here is a 508-residue protein sequence, read N- to C-terminus: Cytochrome P450 monooxygenase BipB (508 aa).

A helical transmembrane segment spans residues 11–31 (ELAWLLLGPLVLFYVFKLFIY). Cys448 lines the heme pocket.

The protein belongs to the cytochrome P450 family. Requires heme as cofactor.

The protein resides in the membrane. It participates in sesquiterpene biosynthesis. Functionally, cytochrome P450 monooxygenase; part of the minimal biosynthetic bip cluster that mediates the biosynthesis of bridged polycyclic sesquiterpenoids derived from sativene, isosativene, and longifolene. The sesquiterpene cyclase BipA acts as a versatile cyclase that converts farnesyl diphosphate (FPP) into (-)-sativene as the dominant product and (-)-isosativene and (-)-longifolene as minor ones. The cytochrome P450 monooxygenase BipB then hydroxylates different enantiomeric sesquiterpenes, such as (-)-longifolene and (+)-longifolene, at C-15 and C-14. The C-15- or both C-15- and C-14-hydroxylated products are further oxidized by unclustered oxidases, resulting in a structurally diverse array of sesquiterpenoids. The BipB-catalyzed hydroxylation at C-15 serves as an initiator for the oxidation by the unclustered oxidases. The sequence is that of Cytochrome P450 monooxygenase BipB from Cochliobolus sativus (Common root rot and spot blotch fungus).